A 433-amino-acid polypeptide reads, in one-letter code: Protein translocase subunit SecY (433 aa).

The next 10 membrane-spanning stretches (helical) occupy residues 17–37, 71–91, 117–137, 141–161, 184–204, 212–232, 268–288, 310–330, 366–386, and 388–408; these read IVFTILILIVCRFGSFIPIPG, IFALAIMPYITASIIIQLMSV, LTVLLASFQAYGVAISLESIV, GPVVILAGFFFRITTVITLVV, LIIFIGIISGVPSAIISMFEL, PLIAIAVCIGVVVLIAIIIFF, GVIPPIFASSILLFPATLANF, YILLYVALIMFFSFFYTAIVF, LTVIGGIYLSVICVIPELLMN, and YVISLSLGGTSFLIVVNVVLD.

It belongs to the SecY/SEC61-alpha family. Component of the Sec protein translocase complex. Heterotrimer consisting of SecY, SecE and SecG subunits. The heterotrimers can form oligomers, although 1 heterotrimer is thought to be able to translocate proteins. Interacts with the ribosome. Interacts with SecDF, and other proteins may be involved. Interacts with SecA.

It localises to the cell inner membrane. Functionally, the central subunit of the protein translocation channel SecYEG. Consists of two halves formed by TMs 1-5 and 6-10. These two domains form a lateral gate at the front which open onto the bilayer between TMs 2 and 7, and are clamped together by SecE at the back. The channel is closed by both a pore ring composed of hydrophobic SecY resides and a short helix (helix 2A) on the extracellular side of the membrane which forms a plug. The plug probably moves laterally to allow the channel to open. The ring and the pore may move independently. The polypeptide is Protein translocase subunit SecY (Rickettsia conorii (strain ATCC VR-613 / Malish 7)).